Here is a 2410-residue protein sequence, read N- to C-terminus: Genome polyprotein 1 (2410 aa).

Residues 1 to 21 form a disordered region; that stretch reads MEQTLAQAVSRRNKTDTPMAE. Residues 474–632 enclose the Helicase ATP-binding domain; the sequence is AMADANNCWS…AARKYPLHVE (159 aa). An ATP-binding site is contributed by 487-494; it reads GHTGSGKS. Residues 583–586 carry the DEAH box motif; that stretch reads DEAH. Residues 647–813 form the Helicase C-terminal domain; that stretch reads GGGDLLDISK…NVPFYMNETF (167 aa). Y1234 carries the post-translational modification O-(5'-phospho-RNA)-tyrosine. Residues 1359–1573 enclose the Peptidase C4 domain; sequence ITLEASTGIL…CGYASHTALF (215 aa). Residues H1404, D1440, and C1507 each act as for nuclear inclusion protein A activity in the active site. In terms of domain architecture, RdRp catalytic spans 1857–1980; that stretch reads WLHGSGDGSR…AISPQFDEEF (124 aa). The segment at 2175-2200 is disordered; the sequence is MPTEDDGKLKTPSGARIPSSAADGNW.

It belongs to the bymoviruses polyprotein 1 family. In terms of processing, VPg is uridylylated by the polymerase and is covalently attached to the 5'-end of the genomic RNA. This uridylylated form acts as a nucleotide-peptide primer for the polymerase. The viral RNA1 of bymoviruses is expressed as a single polyprotein which undergoes post-translational proteolytic processing by the main proteinase NIa-pro resulting in the production of at least eight individual proteins.

It is found in the host cytoplasmic vesicle. The protein localises to the virion. It carries out the reaction RNA(n) + a ribonucleoside 5'-triphosphate = RNA(n+1) + diphosphate. The enzyme catalyses Hydrolyzes glutaminyl bonds, and activity is further restricted by preferences for the amino acids in P6 - P1' that vary with the species of potyvirus, e.g. Glu-Xaa-Xaa-Tyr-Xaa-Gln-|-(Ser or Gly) for the enzyme from tobacco etch virus. The natural substrate is the viral polyprotein, but other proteins and oligopeptides containing the appropriate consensus sequence are also cleaved.. Functionally, indispensable for virus replication. In terms of biological role, mediates the cap-independent, EIF4E-dependent translation of viral genomic RNAs. Binds to the cap-binding site of host EIF4E and thus interferes with the host EIF4E-dependent mRNA export and translation. VPg-RNA directly binds EIF4E and is a template for transcription. Also forms trimeric complexes with EIF4E-EIF4G, which are templates for translation. Has RNA-binding and proteolytic activities. Its function is as follows. An RNA-dependent RNA polymerase that plays an essential role in the virus replication. The sequence is that of Genome polyprotein 1 from Hordeum vulgare (Barley).